We begin with the raw amino-acid sequence, 38 residues long: Photosystem II reaction center protein L (38 aa).

A helical transmembrane segment spans residues 17–37; that stretch reads SLYWGLLLIFVLAVLFSNYFF.

It belongs to the PsbL family. As to quaternary structure, PSII is composed of 1 copy each of membrane proteins PsbA, PsbB, PsbC, PsbD, PsbE, PsbF, PsbH, PsbI, PsbJ, PsbK, PsbL, PsbM, PsbT, PsbX, PsbY, PsbZ, Psb30/Ycf12, at least 3 peripheral proteins of the oxygen-evolving complex and a large number of cofactors. It forms dimeric complexes.

Its subcellular location is the plastid. It localises to the chloroplast thylakoid membrane. Functionally, one of the components of the core complex of photosystem II (PSII). PSII is a light-driven water:plastoquinone oxidoreductase that uses light energy to abstract electrons from H(2)O, generating O(2) and a proton gradient subsequently used for ATP formation. It consists of a core antenna complex that captures photons, and an electron transfer chain that converts photonic excitation into a charge separation. This subunit is found at the monomer-monomer interface and is required for correct PSII assembly and/or dimerization. This is Photosystem II reaction center protein L from Psilotum nudum (Whisk fern).